Consider the following 130-residue polypeptide: Protein ApaG (130 aa).

The region spanning 3 to 127 (RAITRNIQVT…FSLDVPDVRR (125 aa)) is the ApaG domain.

The protein is Protein ApaG of Xanthobacter autotrophicus (strain ATCC BAA-1158 / Py2).